A 618-amino-acid polypeptide reads, in one-letter code: Sodium-coupled monocarboxylate transporter 2 (618 aa).

Residues 1 to 9 are Extracellular-facing; sequence MEVKNFAVW. A helical membrane pass occupies residues 10–30; sequence DYVVFAALFFISSGIGVFFAI. At 31 to 47 the chain is on the cytoplasmic side; it reads KERKKATSREFLVGGRQ. Residues 48-68 traverse the membrane as a helical segment; sequence MSFGPVGLSLTASFMSAVTVL. Over 69–82 the chain is Extracellular; that stretch reads GTPSEVYRFGASFL. A helical membrane pass occupies residues 83 to 103; it reads VFFIAYLFVILLTSELFLPVF. At 104 to 128 the chain is on the cytoplasmic side; sequence YRSGITSTYEYLQLRFNKPVRYAAT. Residues 129–149 traverse the membrane as a helical segment; sequence VIYIVQTILYTGVVVYAPALA. The Extracellular segment spans residues 150-157; it reads LNQVTGFD. The helical transmembrane segment at 158 to 178 threads the bilayer; sequence LWGSVFATGIVCTFYCTLGGL. Over 179–180 the chain is Cytoplasmic; sequence KA. A helical transmembrane segment spans residues 181–201; that stretch reads VVWTDAFQMVVMIVGFLTVLI. Residues 202–235 are Extracellular-facing; sequence QGSTHAGGFHNVLEQSTNGSRLHIFDFDVDPLRR. Residues 236–256 form a helical membrane-spanning segment; it reads HTFWTITVGGTFTWLGIYGVN. The Cytoplasmic portion of the chain corresponds to 257-275; sequence QSTIQRCISCKTEKHAKLA. Residues 276-296 traverse the membrane as a helical segment; it reads LYFNLLGLWIILVCAVFSGLI. Topologically, residues 297–321 are extracellular; the sequence is MYSHFKDCDPWTSGIISAPDQLMPY. A helical membrane pass occupies residues 322–342; that stretch reads FVMEIFATMPGLPGLFVACAF. Over 343–385 the chain is Cytoplasmic; the sequence is SGTLSTVASSINALATVTFEDFVKSCFPHLSDKLSTWISKGLC. A helical transmembrane segment spans residues 386-406; the sequence is LLFGVMCTSMAVAASVMGGVV. Residues 407-411 are Extracellular-facing; sequence QASLS. The helical transmembrane segment at 412 to 432 threads the bilayer; it reads IHGMCGGPMLGLFSLGIVFPF. Residues 433–437 lie on the Cytoplasmic side of the membrane; it reads VNWKG. The helical transmembrane segment at 438–458 threads the bilayer; sequence ALGGLLTGITLSFWVAIGAFI. Residues 459–504 are Extracellular-facing; that stretch reads YPAPASKTWPLPLSTDQCIKSNVTATGPPVLSSRPGIADTWYSISY. N-linked (GlcNAc...) asparagine glycosylation occurs at asparagine 480. The chain crosses the membrane as a helical span at residues 505-525; it reads LYYSAVGCLGCIVAGVIISLI. Topologically, residues 526-618 are cytoplasmic; that stretch reads TGRQRGEDIQ…NNMAFETTHF (93 aa).

Belongs to the sodium:solute symporter (SSF) (TC 2.A.21) family.

Its subcellular location is the apical cell membrane. The enzyme catalyses (S)-lactate(out) + Na(+)(out) = (S)-lactate(in) + Na(+)(in). It carries out the reaction nicotinate(out) + Na(+)(out) = nicotinate(in) + Na(+)(in). It catalyses the reaction pyruvate(out) + Na(+)(out) = pyruvate(in) + Na(+)(in). The catalysed reaction is propanoate(out) + Na(+)(out) = propanoate(in) + Na(+)(in). The enzyme catalyses butanoate(out) + Na(+)(out) = butanoate(in) + Na(+)(in). It carries out the reaction acetoacetate(out) + Na(+)(out) = acetoacetate(in) + Na(+)(in). Its activity is regulated as follows. Cotransport of monocarboxylates and nicotinate strongly inhibited by ibuprofen, fenoprofen and ketoprofen. Acts as an electroneutral and low-affinity sodium (Na(+))-dependent sodium-coupled solute transporter. Catalyzes the transport across the plasma membrane of many monocarboxylates such as lactate, pyruvate, nicotinate, propionate, butyrate and beta-D-hydroxybutyrate. May be responsible for the first step of reabsorption of monocarboxylates from the lumen of the proximal tubule of the kidney and the small intestine. May play also a role in monocarboxylates transport in the retina. In Homo sapiens (Human), this protein is Sodium-coupled monocarboxylate transporter 2.